Consider the following 512-residue polypeptide: Na(+)/H(+) antiporter NhaB (512 aa).

Helical transmembrane passes span 28-48 (FLII…WLLV), 52-72 (IFTL…LLAI), 97-117 (LLLM…LFIF), 144-164 (FLDA…FYGI), 201-221 (LMMH…VGEP), 237-257 (FFLR…LTCF), 296-330 (LALI…IILA), 347-367 (TEAL…AVII), 390-410 (LFYL…VGSV), 446-466 (ATPN…APLI), and 474-494 (VWMA…CVKF).

It belongs to the NhaB Na(+)/H(+) (TC 2.A.34) antiporter family.

The protein localises to the cell inner membrane. It catalyses the reaction 2 Na(+)(in) + 3 H(+)(out) = 2 Na(+)(out) + 3 H(+)(in). Functionally, na(+)/H(+) antiporter that extrudes sodium in exchange for external protons. This is Na(+)/H(+) antiporter NhaB from Enterobacter sp. (strain 638).